Here is a 376-residue protein sequence, read N- to C-terminus: Glutamate 5-kinase (376 aa).

Lys15 lines the ATP pocket. Residues Ser56, Asp143, and Asn155 each contribute to the substrate site. 175–176 (SD) provides a ligand contact to ATP. The PUA domain occupies 281-358 (KGTLTIDAGA…PDVMSILGVS (78 aa)).

This sequence belongs to the glutamate 5-kinase family.

It localises to the cytoplasm. It carries out the reaction L-glutamate + ATP = L-glutamyl 5-phosphate + ADP. Its pathway is amino-acid biosynthesis; L-proline biosynthesis; L-glutamate 5-semialdehyde from L-glutamate: step 1/2. In terms of biological role, catalyzes the transfer of a phosphate group to glutamate to form L-glutamate 5-phosphate. The chain is Glutamate 5-kinase from Rhodopseudomonas palustris (strain HaA2).